The primary structure comprises 485 residues: Adenosylhomocysteinase (485 aa).

Substrate-binding residues include T64, D139, and E205. Residue 206-208 (TTT) participates in NAD(+) binding. Substrate is bound by residues K235 and D239. NAD(+) contacts are provided by residues N240, 269–274 (GYGDVG), E292, N327, and 348–350 (IGH).

This sequence belongs to the adenosylhomocysteinase family. In terms of assembly, homotetramer. NAD(+) serves as cofactor.

It carries out the reaction S-adenosyl-L-homocysteine + H2O = L-homocysteine + adenosine. It participates in amino-acid biosynthesis; L-homocysteine biosynthesis; L-homocysteine from S-adenosyl-L-homocysteine: step 1/1. Adenosylhomocysteine is a competitive inhibitor of S-adenosyl-L-methionine-dependent methyl transferase reactions; therefore adenosylhomocysteinase may play a key role in the control of methylations via regulation of the intracellular concentration of adenosylhomocysteine. This is Adenosylhomocysteinase (SAHH) from Mesembryanthemum crystallinum (Common ice plant).